A 165-amino-acid polypeptide reads, in one-letter code: Protein SprT (165 aa).

One can recognise a SprT-like domain in the interval 19 to 163; it reads REKLAQANLK…RCVKCGEPLV (145 aa). Residue H78 coordinates Zn(2+). The active site involves E79. H82 serves as a coordination point for Zn(2+).

It belongs to the SprT family. Zn(2+) is required as a cofactor.

Its subcellular location is the cytoplasm. This is Protein SprT from Enterobacter sp. (strain 638).